Here is a 410-residue protein sequence, read N- to C-terminus: Cysteine desulfurase IscS (410 aa).

Pyridoxal 5'-phosphate contacts are provided by residues 80 to 81, Asn-160, Gln-188, and 208 to 210; these read AT and SGH. N6-(pyridoxal phosphate)lysine is present on Lys-211. Pyridoxal 5'-phosphate is bound at residue Thr-248. The active-site Cysteine persulfide intermediate is Cys-334. Cys-334 contributes to the [2Fe-2S] cluster binding site.

The protein belongs to the class-V pyridoxal-phosphate-dependent aminotransferase family. NifS/IscS subfamily. As to quaternary structure, homodimer. Forms a heterotetramer with IscU, interacts with other sulfur acceptors. Pyridoxal 5'-phosphate serves as cofactor.

It is found in the cytoplasm. The catalysed reaction is (sulfur carrier)-H + L-cysteine = (sulfur carrier)-SH + L-alanine. It participates in cofactor biosynthesis; iron-sulfur cluster biosynthesis. In terms of biological role, master enzyme that delivers sulfur to a number of partners involved in Fe-S cluster assembly, tRNA modification or cofactor biosynthesis. Catalyzes the removal of elemental sulfur atoms from cysteine to produce alanine. Functions as a sulfur delivery protein for Fe-S cluster synthesis onto IscU, an Fe-S scaffold assembly protein, as well as other S acceptor proteins. In Rickettsia typhi (strain ATCC VR-144 / Wilmington), this protein is Cysteine desulfurase IscS.